The primary structure comprises 347 residues: Phosphate acyltransferase (347 aa).

It belongs to the PlsX family. Homodimer. Probably interacts with PlsY.

It is found in the cytoplasm. It carries out the reaction a fatty acyl-[ACP] + phosphate = an acyl phosphate + holo-[ACP]. It participates in lipid metabolism; phospholipid metabolism. Its function is as follows. Catalyzes the reversible formation of acyl-phosphate (acyl-PO(4)) from acyl-[acyl-carrier-protein] (acyl-ACP). This enzyme utilizes acyl-ACP as fatty acyl donor, but not acyl-CoA. This is Phosphate acyltransferase from Lawsonia intracellularis (strain PHE/MN1-00).